Reading from the N-terminus, the 88-residue chain is Alpha-latrotoxin-associated low molecular weight protein-2 (88 aa).

The signal sequence occupies residues 1 to 19; that stretch reads MLKLICIAFLVTVLTLVAG. Glutamine 20 is modified (pyrrolidone carboxylic acid). Disulfide bonds link cysteine 30/cysteine 66, cysteine 46/cysteine 62, and cysteine 49/cysteine 75.

It belongs to the arthropod CHH/MIH/GIH/VIH hormone family. Post-translationally, the N-terminus is blocked. As to expression, expressed by the venom gland.

The protein resides in the secreted. Its function is as follows. May increase the toxicity of alpha-latrotoxin and/or other venom components. Is non-toxic to mice and to the cockroach Periplaneta americana. This Latrodectus tredecimguttatus (Mediterranean black widow spider) protein is Alpha-latrotoxin-associated low molecular weight protein-2.